The sequence spans 402 residues: Tryptophan synthase beta chain (402 aa).

K91 bears the N6-(pyridoxal phosphate)lysine mark.

Belongs to the TrpB family. Tetramer of two alpha and two beta chains. The cofactor is pyridoxal 5'-phosphate.

It catalyses the reaction (1S,2R)-1-C-(indol-3-yl)glycerol 3-phosphate + L-serine = D-glyceraldehyde 3-phosphate + L-tryptophan + H2O. Its pathway is amino-acid biosynthesis; L-tryptophan biosynthesis; L-tryptophan from chorismate: step 5/5. Functionally, the beta subunit is responsible for the synthesis of L-tryptophan from indole and L-serine. In Streptococcus thermophilus (strain CNRZ 1066), this protein is Tryptophan synthase beta chain.